Reading from the N-terminus, the 352-residue chain is UDP-N-acetylglucosamine--N-acetylmuramyl-(pentapeptide) pyrophosphoryl-undecaprenol N-acetylglucosamine transferase (352 aa).

Positions 195 and 287 each coordinate UDP-N-acetyl-alpha-D-glucosamine.

This sequence belongs to the glycosyltransferase 28 family. MurG subfamily.

It localises to the cell membrane. It carries out the reaction Mur2Ac(oyl-L-Ala-gamma-D-Glu-L-Lys-D-Ala-D-Ala)-di-trans,octa-cis-undecaprenyl diphosphate + UDP-N-acetyl-alpha-D-glucosamine = beta-D-GlcNAc-(1-&gt;4)-Mur2Ac(oyl-L-Ala-gamma-D-Glu-L-Lys-D-Ala-D-Ala)-di-trans,octa-cis-undecaprenyl diphosphate + UDP + H(+). It functions in the pathway cell wall biogenesis; peptidoglycan biosynthesis. Functionally, cell wall formation. Catalyzes the transfer of a GlcNAc subunit on undecaprenyl-pyrophosphoryl-MurNAc-pentapeptide (lipid intermediate I) to form undecaprenyl-pyrophosphoryl-MurNAc-(pentapeptide)GlcNAc (lipid intermediate II). The sequence is that of UDP-N-acetylglucosamine--N-acetylmuramyl-(pentapeptide) pyrophosphoryl-undecaprenol N-acetylglucosamine transferase from Streptococcus pneumoniae (strain Taiwan19F-14).